The chain runs to 340 residues: DnaJ homolog subfamily B member 1 (340 aa).

Residues 2-70 form the J domain; sequence GKDYYQTLGL…REIFDRYGEE (69 aa). T307 carries the phosphothreonine modification.

As to quaternary structure, interacts with DNAJC3. Interacts with HSF1 (via transactivation domain); this interaction results in the inhibition of heat shock- and HSF1-induced transcriptional activity during the attenuation and recovery phase period of the heat shock response. Interacts with BAG3.

It localises to the cytoplasm. It is found in the nucleus. The protein resides in the nucleolus. Functionally, interacts with HSP70 and can stimulate its ATPase activity. Stimulates the association between HSC70 and HIP. Negatively regulates heat shock-induced HSF1 transcriptional activity during the attenuation and recovery phase period of the heat shock response. Stimulates ATP hydrolysis and the folding of unfolded proteins mediated by HSPA1A/B (in vitro). This chain is DnaJ homolog subfamily B member 1 (Dnajb1), found in Mus musculus (Mouse).